Reading from the N-terminus, the 679-residue chain is HEAT repeat-containing protein 3 (679 aa).

A compositionally biased stretch (basic residues) spans 1–11; the sequence is MGKSRTKRFKR. Residues 1–40 form a disordered region; sequence MGKSRTKRFKRPQFSPIESCQAEAAAASNGTGDEEDDGPA. The residue at position 15 (Ser15) is a Phosphoserine. HEAT repeat units follow at residues 38 to 69 and 74 to 110; these read GPAAELLEKLQHPSAEVRECACAGLARLVQQR and DLARRDAVRRLGPLLLDSSLAVRETAAGALRNLSACG. Ser144 is subject to Phosphoserine. Thr339 carries the post-translational modification Phosphothreonine.

This sequence belongs to the nuclear import and ribosome assembly adapter family. As to quaternary structure, component of a hexameric 5S RNP precursor complex, composed of 5S RNA, RRS1, RPF2/BXDC1, RPL5, RPL11 and HEATR3; this complex acts as a precursor for ribosome assembly.

Plays a role in ribosome biogenesis and in nuclear import of the 60S ribosomal protein L5/large ribosomal subunit protein uL18 (RPL5). Required for proper erythrocyte maturation. The sequence is that of HEAT repeat-containing protein 3 (Heatr3) from Mus musculus (Mouse).